Here is a 592-residue protein sequence, read N- to C-terminus: Sodium- and chloride-dependent transporter XTRP3A (592 aa).

Residues 1-7 (MEKARPQ) lie on the Cytoplasmic side of the membrane. A helical transmembrane segment spans residues 8–28 (WGHPLQFVFACISYAVGLGNV). The Extracellular segment spans residues 29–42 (WRFPYLCQMYGGGS). The helical transmembrane segment at 43–63 (FLVPYIIMLIVEGMPLLYLEL) threads the bilayer. At 64–79 (AVGQRMRQGSIGAWRT) the chain is on the cytoplasmic side. Residues 80–100 (ISPYLSGVGVASVVVSFFLSM) traverse the membrane as a helical segment. The Extracellular portion of the chain corresponds to 101-165 (YYNVINAWGF…ISPSIQENGG (65 aa)). A glycan (N-linked (GlcNAc...) asparagine) is linked at N131. A helical membrane pass occupies residues 166–186 (VQWEPALCLTLAWLMVYLCIL). Residues 187 to 194 (RGTESTGK) are Cytoplasmic-facing. The helical transmembrane segment at 195 to 215 (VVYFTASMPYCVLIIYLVRGL) threads the bilayer. At 216–241 (TLHGATNGLMYMFTPKMEQLANPKAW) the chain is on the extracellular side. Residues 242 to 262 (INAATQIFFSLGLGFGSLIAF) form a helical membrane-spanning segment. At 263 to 276 (ASYNEPSNNCQKHA) the chain is on the cytoplasmic side. A helical membrane pass occupies residues 277 to 297 (IIVSIINSSTSIFASIVTFSI). The Extracellular segment spans residues 298–389 (YGFKATFNYE…EAIKNMEVSQ (92 aa)). Residues 390-410 (LWSVLYFFMLLMLGIGSMLGN) traverse the membrane as a helical segment. Residues 411–431 (TAAILTPLTDSKVISSYLPKE) lie on the Cytoplasmic side of the membrane. Residues 432 to 452 (AISGLVCLINCAVGMVFTMEA) traverse the membrane as a helical segment. The Extracellular segment spans residues 453–465 (GNYWFDIFNDYAA). Residues 466–486 (TLSLLLIVLVETIAVCYVYGL) traverse the membrane as a helical segment. At 487–504 (KRFESDLRAMTGRTLSWY) the chain is on the cytoplasmic side. A helical membrane pass occupies residues 505 to 525 (WKVMWAFVSPLLIVGLFIFYL). At 526-554 (SDYILTGTLQYQAWDATQGQLVTKDYPPH) the chain is on the extracellular side. Residues 555–575 (ALAVIGLLVASSTMCIPLVAL) form a helical membrane-spanning segment. Over 576 to 592 (GTFIRNRLKRGGSAPVA) the chain is Cytoplasmic.

It belongs to the sodium:neurotransmitter symporter (SNF) (TC 2.A.22) family. SLC6A20 subfamily. Expressed in brain, kidney, small intestine, thymus, spleen and lung. In the brain, expressed in cerebellum, cortex and brain stem. Not detected in liver, muscle or heart. In brain, widespread in various regions, including the meninges, choroid plexus, cortex, hippocampus and thalamus.

Its subcellular location is the apical cell membrane. The enzyme catalyses L-proline(out) + chloride(out) + 2 Na(+)(out) = L-proline(in) + chloride(in) + 2 Na(+)(in). The catalysed reaction is 4-hydroxy-L-proline(out) + chloride(out) + 2 Na(+)(out) = 4-hydroxy-L-proline(in) + chloride(in) + 2 Na(+)(in). It carries out the reaction 2-methyl-2-(methylamino)propanoate(out) + chloride(out) + 2 Na(+)(out) = 2-methyl-2-(methylamino)propanoate(in) + chloride(in) + 2 Na(+)(in). It catalyses the reaction L-pipecolate(out) + chloride(out) + 2 Na(+)(out) = L-pipecolate(in) + chloride(in) + 2 Na(+)(in). The enzyme catalyses glycine betaine(out) + chloride(out) + 2 Na(+)(out) = glycine betaine(in) + chloride(in) + 2 Na(+)(in). The catalysed reaction is glycine(out) + chloride(out) + 2 Na(+)(out) = glycine(in) + chloride(in) + 2 Na(+)(in). Its function is as follows. Mediates the Na(+)- and Cl(-)-dependent uptake of imino acids such as L-proline, N-methyl-L-proline and pipecolate as well as N-methylated amino acids. Also transports glycine, regulates proline and glycine homeostasis in the brain playing a role in the modulation of NMDAR currents. This is Sodium- and chloride-dependent transporter XTRP3A from Mus musculus (Mouse).